Reading from the N-terminus, the 398-residue chain is MSVFSLKIDIADNKFFNGETSPLFSQSQAKLARQFHQKIAGYRPTPLCALDDLANLFGVKKILVKDESKRFGLNAFKMLGGAYAIAQLLCEKYHLDIETLSFEHLKNAIGEKMTFATTTDGNHGRGVAWAAQQLGQNAVIYMPKGSAQERVDAILNLGAECIVTDMNYDDTVRLTMQHAQQHGWEVVQDTAWEGYTKIPTWIMQGYATLADEAVEQMREMGVTPTHVLLQAGVGAMAGGVLGYLVDVYSPQNLHSIIVEPDKADCIYRSGVKGDIVNVGGDMATIMAGLACGEPNPLGWEILRNCATQFISCQDSVAALGMRVLGNPYGNDPRIISGESGAVGLGVLAAVHYHPQRQSLMEKLALNKDAVVLVISTEGDTDVKHYREVVWEGKHAVAP.

Lys77 bears the N6-(pyridoxal phosphate)lysine mark.

The protein belongs to the diaminopropionate ammonia-lyase family. As to quaternary structure, homodimer. It depends on pyridoxal 5'-phosphate as a cofactor.

It carries out the reaction (S)-2,3-diaminopropanoate + H2O + H(+) = pyruvate + 2 NH4(+). It catalyses the reaction (R)-2,3-diaminopropanoate + H2O + H(+) = pyruvate + 2 NH4(+). Its function is as follows. Catalyzes the alpha,beta-elimination reaction of both L- and D-alpha,beta-diaminopropionate (DAP) to form pyruvate and ammonia. The D-isomer of serine is degraded to pyruvate, though very poorly; other amino acids (L-serine, D- and L-threonine, D- and L-beta-Cl-alanine) are not substrates. The sequence is that of Diaminopropionate ammonia-lyase (ygeX) from Escherichia coli O157:H7.